The following is a 599-amino-acid chain: MAYVPLSGTNVRILADVPFSNDYKNTRWFTSSSNQYNWFNRKSRVYEMSKVTFMGFRENKPYVSVSLPIDKLYSASYIMFQNADYGNKWFYAFVTELEFKNSAVTYVHFEIDVLQTWMFDMKFQESFIVREHVKLWNDDGTPTINTIDEGLSYGSEYDIVSVENHKPYDDMMFLVIISKSIMHGTPGEEESRLNDINASLNGMPQPLCYYIHPFYKDGKVPKTYIGDNNANLSPIVNMLTNIFSQKSAVNDIVNMYVTDYIGLKLDYKNGDKELKLDKDMFEQAGIADDKHGNVDTIFVKKIPDYEALEIDTGDKWGGFTKDQESKLMMYPYCVTEITDFKGNHMNLKTEYINNSKLKIQVRGSLGVSNKVAYSVQDYNADSALSGGNRLTASLDSSLINNNPNDIAILNDYLSAYLQGNKNSLENQKSSILFNGIMGMIGGGISAGASAAGGSALGMASSVTGMTSTAGNAVLQMQAMQAKQADIANIPPQLTKMGGNTAFDYGNGYRGVYVIKKQLKAEYRRSLSSFFHKYGYKINRVKKPNLRTRKAFNYVQTKDCFISGDINNNDLQEIRTIFDNGITLWHTDNIGNYSVENELR.

Homohexamer; forms a hexameric tube structure with six flexible hydrophobic loops.

The protein localises to the virion. Distal (knob) tail protein that plugs the end of the tube before DNA ejection and forms a channel perforating the host membrane during ejection. The chain is Tail knob protein gp9 from Bacillus subtilis (Bacteriophage phi-29).